The sequence spans 262 residues: uncharacterized protein (262 aa).

The protein belongs to the AB hydrolase superfamily. AB hydrolase 2 family.

This is an uncharacterized protein from Mycosarcoma maydis (Corn smut fungus).